A 218-amino-acid chain; its full sequence is UPF0301 protein RPB_4502 (218 aa).

A disordered region spans residues 1–26 (MVTKSKRPKSGDRSGREPGNAGPIEQ).

The protein belongs to the UPF0301 (AlgH) family.

In Rhodopseudomonas palustris (strain HaA2), this protein is UPF0301 protein RPB_4502.